The sequence spans 440 residues: D-serine dehydratase (440 aa).

Lys-116 bears the N6-(pyridoxal phosphate)lysine mark.

It belongs to the serine/threonine dehydratase family. DsdA subfamily. Monomer. Pyridoxal 5'-phosphate serves as cofactor.

It catalyses the reaction D-serine = pyruvate + NH4(+). The polypeptide is D-serine dehydratase (Salmonella paratyphi A (strain ATCC 9150 / SARB42)).